The sequence spans 710 residues: Lactoperoxidase (710 aa).

The N-terminal stretch at Met1–Ser22 is a signal peptide. Positions Thr23 to Arg98 are excised as a propeptide. Asn25, Asn104, and Asn131 each carry an N-linked (GlcNAc...) asparagine glycan. Residues Cys130 and Cys143 are joined by a disulfide bond. Heme b is bound at residue Asp223. His224 (proton acceptor) is an active-site residue. Residue Asp225 coordinates Ca(2+). N-linked (GlcNAc...) asparagine glycosylation occurs at Asn238. 2 disulfide bridges follow: Cys244–Cys254 and Cys248–Cys272. Positions 299, 301, 303, and 305 each coordinate Ca(2+). Ser313 carries the phosphoserine modification. A glycan (N-linked (GlcNAc...) asparagine) is linked at Asn320. A disulfide bridge links Cys352 with Cys363. Heme b-binding residues include Glu373 and His466. Tyr480 is modified (3'-nitrotyrosine). 2 cysteine pairs are disulfide-bonded: Cys571-Cys628 and Cys669-Cys694.

Belongs to the peroxidase family. XPO subfamily. The cofactor is Ca(2+). Heme b serves as cofactor. In terms of tissue distribution, expressed in the lacrimal gland with higher levels and 3-fold higher activity in adult females than males and secreted into tears (at protein level).

It is found in the secreted. Its subcellular location is the cytoplasm. The enzyme catalyses 2 a phenolic donor + H2O2 = 2 a phenolic radical donor + 2 H2O. It catalyses the reaction thiocyanate + H2O2 + H(+) = hypothiocyanous acid + H2O. It carries out the reaction iodide + H2O2 = hypoiodite + H2O. In terms of biological role, heme-containing oxidoreductase which catalyzes the conversion of thiocyanate (SCN(-)) into antimicrobial agent hypothiocyanous acid (OSCN(-)) in the presence of hydrogen peroxide (H2O2). Also involved in the conversion of iodide (I(-)) into hypoiodite (IO(-)) in the presence of H2O2. Responsible for the inactivation of a wide range of micro-organisms and hence, important component of defense mechanism. May be implicated in airway host defense against infection. May contribute to maintaining an appropriate H2O2 cellular level, therefore protecting cells from H2O2-caused injuries and inflammation. The sequence is that of Lactoperoxidase (LPO) from Mesocricetus auratus (Golden hamster).